The primary structure comprises 448 residues: Phosphoglucosamine mutase (448 aa).

S102 (phosphoserine intermediate) is an active-site residue. Residues S102, D243, D245, and D247 each coordinate Mg(2+). S102 bears the Phosphoserine mark.

Belongs to the phosphohexose mutase family. Requires Mg(2+) as cofactor. In terms of processing, activated by phosphorylation.

The enzyme catalyses alpha-D-glucosamine 1-phosphate = D-glucosamine 6-phosphate. In terms of biological role, catalyzes the conversion of glucosamine-6-phosphate to glucosamine-1-phosphate. The chain is Phosphoglucosamine mutase from Mycobacterium bovis (strain ATCC BAA-935 / AF2122/97).